Here is a 625-residue protein sequence, read N- to C-terminus: Alpha-amylase 1 (625 aa).

Positions 1 to 22 (MGFSKIALFSLFALFGLPTSLA) are cleaved as a signal peptide. Cysteine 51 and cysteine 59 form a disulfide bridge. Tryptophan 105 contributes to the substrate binding site. Asparagine 143 contacts Ca(2+). N-linked (GlcNAc...) asparagine glycans are attached at residues asparagine 153, asparagine 163, and asparagine 180. A disulfide bridge connects residues cysteine 172 and cysteine 187. Residues glutamate 185 and aspartate 198 each contribute to the Ca(2+) site. Arginine 227 contributes to the substrate binding site. Aspartate 229 is a Ca(2+) binding site. The active-site Nucleophile is aspartate 229. 232 to 233 (KQ) contacts substrate. A glycan (N-linked (GlcNAc...) asparagine) is linked at asparagine 241. Ca(2+) is bound at residue glutamate 253. The active-site Proton donor is the glutamate 253. N-linked (GlcNAc...) asparagine glycans are attached at residues asparagine 260 and asparagine 286. A disulfide bridge connects residues cysteine 263 and cysteine 306. Aspartate 322 lines the substrate pocket. An N-linked (GlcNAc...) asparagine glycan is attached at asparagine 331. Substrate is bound at residue arginine 370. Asparagine 440 and asparagine 461 each carry an N-linked (GlcNAc...) asparagine glycan. The disordered stretch occupies residues 526-579 (SATSSSKSSSSSSSRSGSSSSSSSRSGSTSSSGSSHTITSTSQSVHTSGSSTST). Serine 603 carries the GPI-anchor amidated serine lipid modification. A propeptide spans 604 to 625 (SANAVRVSILGVAAFIAIVLFI) (removed in mature form).

It belongs to the glycosyl hydrolase 13 family. It depends on Ca(2+) as a cofactor.

The protein localises to the cell membrane. The catalysed reaction is Endohydrolysis of (1-&gt;4)-alpha-D-glucosidic linkages in polysaccharides containing three or more (1-&gt;4)-alpha-linked D-glucose units.. This is Alpha-amylase 1 (aah1) from Schizosaccharomyces pombe (strain 972 / ATCC 24843) (Fission yeast).